Reading from the N-terminus, the 784-residue chain is MGSALLLALGLLAQSLGLSWAVPEPKPSTLYPWRRASAPGRVRRAWVIPPISVSENHKRLPYPLVQIKSDKQQLGSVIYSIQGPGVDEEPRNVFSIDKFTGRVYLNATLDREKTDRFRLRAFALDLGGSTLEDPTDLEIVVVDQNDNRPAFLQDVFRGRILEGAIPGTFVTRAEATDADDPETDNAALRFSILEQGSPEFFSIDEHTGEIRTVQVGLDREVVAVYNLTLQVADMSGDGLTATASAIISIDDINDNAPEFTKDEFFMEAAEAVSGVDVGRLEVEDKDLPGSPNWVARFTILEGDPDGQFKIYTDPKTNEGVLSVVKPLDYESREQYELRVSVQNEAPLQAAAPRARRGQTRVSVWVQDTNEAPVFPENPLRTSIAEGAPPGTSVATFSARDPDTEQLQRISYSKDYDPEDWLQVDGATGRIQTQRVLSPASPFLKDGWYRAIILALDNAIPPSTATGTLSIEILEVNDHAPALALPPSGSLCSEPDQGPGLLLGATDEDLPPHGAPFHFQLNPRVPDLGRNWSVSQINVSHARLRLRHQVSEGLHRLSLLLQDSGEPPQQREQTLNVTVCRCGSDGTCLPGAAALRGGGVGVSLGALVIVLASTVVLLVLILLAALRTRFRGHSRGKSLLHGLQEDLRDNILNYDEQGGGEEDQDAYDINQLRHPVEPRATSRSLGRPPLRRDAPFSYVPQPHRVLPTSPSDIANFISDGLEAADSDPSVPPYDTALIYDYEGDGSVAGTLSSILSSLGDEDQDYDYLRDWGPRFARLADMYGHQ.

An N-terminal signal peptide occupies residues 1–21 (MGSALLLALGLLAQSLGLSWA). A propeptide spanning residues 22 to 59 (VPEPKPSTLYPWRRASAPGRVRRAWVIPPISVSENHKR) is cleaved from the precursor. Cadherin domains are found at residues 60–151 (LPYP…RPAF), 152–259 (LQDV…APEF), 260–374 (TKDE…APVF), 375–480 (PENP…DHAP), and 481–589 (ALAL…TCLP). Residues 60–605 (LPYPLVQIKS…GGGVGVSLGA (546 aa)) are Extracellular-facing. N-linked (GlcNAc...) asparagine glycosylation is found at Asn106 and Asn226. N-linked (GlcNAc...) asparagine glycans are attached at residues Asn530, Asn537, and Asn575. A helical transmembrane segment spans residues 606–625 (LVIVLASTVVLLVLILLAAL). Over 626–784 (RTRFRGHSRG…ARLADMYGHQ (159 aa)) the chain is Cytoplasmic. The segment at 676-700 (EPRATSRSLGRPPLRRDAPFSYVPQ) is disordered.

Skeletal muscle.

It is found in the cell membrane. Its function is as follows. Cadherins are calcium-dependent cell adhesion proteins. They preferentially interact with themselves in a homophilic manner in connecting cells; cadherins may thus contribute to the sorting of heterogeneous cell types. M-cadherin is part of the myogenic program and may provide a trigger for terminal muscle differentiation. The chain is Cadherin-15 (Cdh15) from Mus musculus (Mouse).